Here is a 371-residue protein sequence, read N- to C-terminus: Protein NDRG2 (371 aa).

The disordered stretch occupies residues 1 to 22 (MAELQEVQITEEKPLLPGQTPE). Ala2 carries the post-translational modification N-acetylalanine. Thr20 is subject to Phosphothreonine. A phosphoserine mark is found at Ser326 and Ser328. Thr330 is modified (phosphothreonine; by SGK1). Residue Ser332 is modified to Phosphoserine; by PKC/PRKCQ or SGK1. Thr334 is modified (phosphothreonine). The segment at 334-371 (TSAASIDGSRSRSRTLSQSSESGTLPSGPPGHTMEVSC) is disordered. Phosphoserine occurs at positions 335, 338, and 344. Thr348 carries the post-translational modification Phosphothreonine; by PKB/AKT1 or SGK1. Residues Ser350, Ser352, Ser353, and Ser355 each carry the phosphoserine modification. Phosphothreonine is present on Thr357. The residue at position 370 (Ser370) is a Phosphoserine.

This sequence belongs to the NDRG family. In terms of assembly, interacts with CTNNB1. As to expression, expressed at highest levels in brain, heart and liver, and at lower levels in kidney, colon, skeletal muscle, adrenal gland, ovary and uterus (at protein level).

Its subcellular location is the cytoplasm. The protein localises to the perinuclear region. It is found in the cell projection. It localises to the growth cone. In terms of biological role, contributes to the regulation of the Wnt signaling pathway. Down-regulates CTNNB1-mediated transcriptional activation of target genes, such as CCND1, and may thereby act as tumor suppressor. May be involved in dendritic cell and neuron differentiation. The polypeptide is Protein NDRG2 (Ndrg2) (Mus musculus (Mouse)).